The primary structure comprises 568 residues: Cyclin-dependent kinase-like 2 (568 aa).

One can recognise a Protein kinase domain in the interval 4–289; it reads YENLGLVGEG…CADLLRHDFF (286 aa). Residues 10–18 and K33 each bind ATP; that span reads VGEGSYGMV. The [NKR]KIAxRE motif lies at 45-51; that stretch reads KKIAMRE. The active-site Proton acceptor is the D126. Disordered stretches follow at residues 309 to 333 and 545 to 568; these read DARNNSLPKKSQNRKKEKDDALGEE and SHQGAGSPLSDDSEADLPRMEHQH. Positions 322 to 333 are enriched in basic and acidic residues; it reads RKKEKDDALGEE.

This sequence belongs to the protein kinase superfamily. CMGC Ser/Thr protein kinase family. CDC2/CDKX subfamily. In terms of tissue distribution, expressed in testis, kidney, lung and brain.

It is found in the cytoplasm. It localises to the nucleus. The catalysed reaction is L-seryl-[protein] + ATP = O-phospho-L-seryl-[protein] + ADP + H(+). It carries out the reaction L-threonyl-[protein] + ATP = O-phospho-L-threonyl-[protein] + ADP + H(+). The chain is Cyclin-dependent kinase-like 2 from Mus musculus (Mouse).